We begin with the raw amino-acid sequence, 609 residues long: MCGIVGAIAGRDVVPVLIEGLKRLEYRGYDSSGIAVLESGSIRRVRRTGRVAEMAVAATQEGFTASLGIGHTRWATHGGVTEANAHPHVSHGVVLVHNGIIENHEVQRERLSALGYVFQSQTDTEVIAHLIHYHMQQGDDLLGALQCAVKALTGIYALAVMSEAEPERFVCARMGCPLLIGIGDGEHLVASDISAVIQATRQVIFLEDGDTAEIRRDGISIFNAEQCPVERPLHLSNVSLSSLELGEFRHFMQKEIHEQPRVLADTMEAAIDAAGFPPMLFGAQAESVFRGITGIQILACGTSYYAGLTARYWIEAIAGLPCHVEIASEYRYRKAYVNPQHLVVTISQSGETLDTLEALKYAKALGHRHTLSICNAPDSAIPRISELICYTRAGPEIGVASTKAFTTQLVVLFQLAVALGVLRGAVDAEHEAAYLEQLRQLPCGVQQALNLEPQIAAWAECFASRHHALFLGRGLHYPIALEGALKLKEISYIHAEAYPAGELKHGPLALVDADMPVVVIAPNDSLLEKVKSNMQEVRARGGELFVFADQDSHFSESEGLHVIRTLRHTGVLSPLVHTIPVQLLAYHTALVRGTDVDKPRNLAKSVTVE.

Cys2 acts as the Nucleophile; for GATase activity in catalysis. One can recognise a Glutamine amidotransferase type-2 domain in the interval Cys2 to Asp217. SIS domains lie at Ala285 to Ala425 and Trp458 to Pro599. The active-site For Fru-6P isomerization activity is the Lys604.

Homodimer.

The protein localises to the cytoplasm. The enzyme catalyses D-fructose 6-phosphate + L-glutamine = D-glucosamine 6-phosphate + L-glutamate. Functionally, catalyzes the first step in hexosamine metabolism, converting fructose-6P into glucosamine-6P using glutamine as a nitrogen source. In Xylella fastidiosa (strain 9a5c), this protein is Glutamine--fructose-6-phosphate aminotransferase [isomerizing].